We begin with the raw amino-acid sequence, 46 residues long: Antimicrobial peptide eNAP-2 (46 aa).

Residues 12–46 (RPGRCPTVPPGTFGHCACLCTGDASEPKGQKCCSN) enclose the WAP domain.

In terms of biological role, has antibiotic activity against several equine uterine pathogens; S.zooepidemicus, E.coli and P.aeruginosa. Highly efficient against S.zoopedemicus. Not active against K.pneumoniae. Selectively inactivates microbial serine proteases (subtilisin A and proteinase K) without inhibiting mammalian serine proteases (human neutrophil elastase, human cathepsin G and bovine pancreatic trypsin). This Equus caballus (Horse) protein is Antimicrobial peptide eNAP-2.